The primary structure comprises 517 residues: tRNA-2-methylthio-N(6)-dimethylallyladenosine synthase (517 aa).

The 118-residue stretch at 29-146 folds into the MTTase N-terminal domain; sequence RTYQVRTYGC…LPTLLERARH (118 aa). Positions 38, 75, 109, 183, 187, and 190 each coordinate [4Fe-4S] cluster. The Radical SAM core domain maps to 169–405; the sequence is RESAYAAWVS…VELQESISLQ (237 aa). Positions 408–475 constitute a TRAM domain; sequence QALVGQTVEL…PHHLIADAGV (68 aa).

It belongs to the methylthiotransferase family. MiaB subfamily. Monomer. [4Fe-4S] cluster serves as cofactor.

It is found in the cytoplasm. It carries out the reaction N(6)-dimethylallyladenosine(37) in tRNA + (sulfur carrier)-SH + AH2 + 2 S-adenosyl-L-methionine = 2-methylsulfanyl-N(6)-dimethylallyladenosine(37) in tRNA + (sulfur carrier)-H + 5'-deoxyadenosine + L-methionine + A + S-adenosyl-L-homocysteine + 2 H(+). Its function is as follows. Catalyzes the methylthiolation of N6-(dimethylallyl)adenosine (i(6)A), leading to the formation of 2-methylthio-N6-(dimethylallyl)adenosine (ms(2)i(6)A) at position 37 in tRNAs that read codons beginning with uridine. The chain is tRNA-2-methylthio-N(6)-dimethylallyladenosine synthase from Mycolicibacterium paratuberculosis (strain ATCC BAA-968 / K-10) (Mycobacterium paratuberculosis).